The following is a 388-amino-acid chain: Cytochrome b (388 aa).

Transmembrane regions (helical) follow at residues 32–52 (FGSL…TLAM), 76–98 (WLIR…LHVG), 113–133 (TWTI…LGYV), and 179–199 (FFAL…MHLI). Heme b contacts are provided by histidine 82 and histidine 96. Residues histidine 183 and histidine 197 each contribute to the heme b site. Histidine 202 is an a ubiquinone binding site. A run of 4 helical transmembrane segments spans residues 226-246 (FIFK…IFIF), 290-310 (LLGV…PITD), 322-342 (LSKI…QLGA), and 349-369 (FIEF…IIVP).

The protein belongs to the cytochrome b family. As to quaternary structure, fungal cytochrome b-c1 complex contains 10 subunits; 3 respiratory subunits, 2 core proteins and 5 low-molecular weight proteins. Cytochrome b-c1 complex is a homodimer. The cofactor is heme b.

The protein localises to the mitochondrion inner membrane. In terms of biological role, component of the ubiquinol-cytochrome c reductase complex (complex III or cytochrome b-c1 complex) that is part of the mitochondrial respiratory chain. The b-c1 complex mediates electron transfer from ubiquinol to cytochrome c. Contributes to the generation of a proton gradient across the mitochondrial membrane that is then used for ATP synthesis. This Zymoseptoria tritici (Speckled leaf blotch fungus) protein is Cytochrome b (cob).